Here is a 349-residue protein sequence, read N- to C-terminus: Isopentenyl-diphosphate delta-isomerase (349 aa).

Position 9–10 (9–10) interacts with substrate; that stretch reads RK. FMN-binding positions include 65 to 67, Ser-95, and Asn-124; that span reads AMT. 95 to 97 contributes to the substrate binding site; that stretch reads STH. Gln-154 contributes to the substrate binding site. Position 155 (Glu-155) interacts with Mg(2+). Residues Lys-186, Ser-211, Thr-216, 262–264, and 283–284 contribute to the FMN site; these read GLR and SR.

Belongs to the IPP isomerase type 2 family. Homooctamer. Dimer of tetramers. It depends on FMN as a cofactor. The cofactor is NADPH. Requires Mg(2+) as cofactor.

The protein localises to the cytoplasm. The enzyme catalyses isopentenyl diphosphate = dimethylallyl diphosphate. In terms of biological role, involved in the biosynthesis of isoprenoids. Catalyzes the 1,3-allylic rearrangement of the homoallylic substrate isopentenyl (IPP) to its allylic isomer, dimethylallyl diphosphate (DMAPP). In Staphylococcus aureus (strain N315), this protein is Isopentenyl-diphosphate delta-isomerase.